The following is a 323-amino-acid chain: Aquaporin-4 (323 aa).

Over methionine 1–lysine 36 the chain is Cytoplasmic. S-palmitoyl cysteine attachment occurs at residues cysteine 13 and cysteine 17. The chain crosses the membrane as a helical span at residues alanine 37 to isoleucine 57. The Extracellular segment spans residues asparagine 58–aspartate 69. Residues methionine 70–glycine 89 traverse the membrane as a helical segment. The Cytoplasmic segment spans residues histidine 90–glycine 93. Residues glycine 94–threonine 101 constitute an intramembrane region (discontinuously helical). Positions asparagine 97–alanine 99 match the NPA 1 motif. The Cytoplasmic segment spans residues valine 102–serine 115. Serine 111 is modified (phosphoserine; by PKG). The chain crosses the membrane as a helical span at residues valine 116–valine 136. Residues threonine 137 to threonine 155 are Extracellular-facing. Asparagine 153 is a glycosylation site (N-linked (GlcNAc...) asparagine). Residues alanine 156–alanine 176 traverse the membrane as a helical segment. Residues serine 177–aspartate 184 lie on the Cytoplasmic side of the membrane. Position 180 is a phosphoserine; by PKC (serine 180). The chain crosses the membrane as a helical span at residues valine 185–isoleucine 205. Over asparagine 206–threonine 208 the chain is Extracellular. Residues glycine 209–valine 222 constitute an intramembrane region (discontinuously helical). An NPA 2 motif is present at residues asparagine 213 to alanine 215. Residues isoleucine 223 to tryptophan 231 lie on the Extracellular side of the membrane. The helical transmembrane segment at isoleucine 232–phenylalanine 252 threads the bilayer. Topologically, residues cysteine 253–valine 323 are cytoplasmic. Phosphoserine is present on residues serine 276 and serine 285. At threonine 289 the chain carries Phosphothreonine. Residue serine 321 is modified to Phosphoserine.

The protein belongs to the MIP/aquaporin (TC 1.A.8) family. In terms of assembly, homotetramer. The tetramers can form oligomeric arrays in membranes. The size of the oligomers differs between tissues and is smaller in skeletal muscle than in brain. Interaction between AQP4 oligomeric arrays in close-by cells can contribute to cell-cell adhesion. Part of a complex containing MLC1, TRPV4, HEPACAM and ATP1B1. Phosphorylation by PKC at Ser-180 promotes internalization from the cell membrane, reducing the conductance by 50%. Phosphorylation by PKG at Ser-111 in response to glutamate increases conductance by 40%. Post-translationally, isoform Long: Palmitoylated on its N-terminal region. Isoform 3: Not palmitoylated. Detected in cerebellum. Detected on pericapillary astrocyte endfeet in cerebellum, and in skeletal muscle. Detected in glial lamellae in the hypothalamus (at protein level). Abundant in mature brain cortex, cerebellum and spinal cord. Highly expressed in the ependymal cell lining the aqueductal system and over the space of the brain in contact with the subarachnoid space. Detected in paraventricular and supraoptic nuclei, the granule cell layer of the dentate gyrus and the Purkinje cell layer in the cerebellum. Only weakly detectable in eye, kidney, intestine, and lung.

The protein localises to the cell membrane. It is found in the basolateral cell membrane. It localises to the endosome membrane. The protein resides in the sarcolemma. Its subcellular location is the cell projection. The enzyme catalyses H2O(in) = H2O(out). In terms of biological role, forms a water-specific channel. Plays an important role in brain water homeostasis and in glymphatic solute transport. Required for a normal rate of water exchange across the blood brain interface. Required for normal levels of cerebrospinal fluid influx into the brain cortex and parenchyma along paravascular spaces that surround penetrating arteries, and for normal drainage of interstitial fluid along paravenous drainage pathways. Thereby, it is required for normal clearance of solutes from the brain interstitial fluid, including soluble beta-amyloid peptides derived from APP. Plays a redundant role in urinary water homeostasis and urinary concentrating ability. This is Aquaporin-4 (Aqp4) from Rattus norvegicus (Rat).